The primary structure comprises 263 residues: Cytochrome c oxidase subunit 3 (263 aa).

7 consecutive transmembrane segments (helical) span residues 7 to 27, 44 to 64, 78 to 98, 120 to 140, 145 to 165, 191 to 211, and 241 to 261; these read ITVL…KAHL, FSVG…VYSI, GMLS…WGIL, LILT…CLQF, GMSL…ECFA, VTGL…IYFI, and ITIL…YFFY.

This sequence belongs to the cytochrome c oxidase subunit 3 family. As to quaternary structure, component of the cytochrome c oxidase (complex IV, CIV), a multisubunit enzyme composed of a catalytic core of 3 subunits and several supernumerary subunits. The complex exists as a monomer or a dimer and forms supercomplexes (SCs) in the inner mitochondrial membrane with ubiquinol-cytochrome c oxidoreductase (cytochrome b-c1 complex, complex III, CIII).

The protein resides in the mitochondrion inner membrane. The catalysed reaction is 4 Fe(II)-[cytochrome c] + O2 + 8 H(+)(in) = 4 Fe(III)-[cytochrome c] + 2 H2O + 4 H(+)(out). Component of the cytochrome c oxidase, the last enzyme in the mitochondrial electron transport chain which drives oxidative phosphorylation. The respiratory chain contains 3 multisubunit complexes succinate dehydrogenase (complex II, CII), ubiquinol-cytochrome c oxidoreductase (cytochrome b-c1 complex, complex III, CIII) and cytochrome c oxidase (complex IV, CIV), that cooperate to transfer electrons derived from NADH and succinate to molecular oxygen, creating an electrochemical gradient over the inner membrane that drives transmembrane transport and the ATP synthase. Cytochrome c oxidase is the component of the respiratory chain that catalyzes the reduction of oxygen to water. Electrons originating from reduced cytochrome c in the intermembrane space (IMS) are transferred via the dinuclear copper A center (CU(A)) of subunit 2 and heme A of subunit 1 to the active site in subunit 1, a binuclear center (BNC) formed by heme A3 and copper B (CU(B)). The BNC reduces molecular oxygen to 2 water molecules using 4 electrons from cytochrome c in the IMS and 4 protons from the mitochondrial matrix. In Plasmodium vivax, this protein is Cytochrome c oxidase subunit 3 (COIII).